Here is a 52-residue protein sequence, read N- to C-terminus: Lantibiotic epidermin (52 aa).

A propeptide spanning residues 1-30 (MEAVKEKNDLFNLDVKVNAKESNDSGAEPR) is cleaved from the precursor. The lanthionine (Ser-Cys) cross-link spans 33 to 37 (SKFIC). Residues 38 to 41 (TPGC) constitute a cross-link (beta-methyllanthionine (Thr-Cys)). (Z)-2,3-didehydrobutyrine is present on T44. Positions 46-51 (SFNSYC) form a cross-link, lanthionine (Ser-Cys). Positions 49 to 52 (SYCC) form a cross-link, S-(2-aminovinyl)-D-cysteine (Ser-Cys).

It belongs to the type A lantibiotic family. In terms of processing, maturation of lantibiotics involves the enzymatic conversion of Thr, and Ser into dehydrated AA and the formation of thioether bonds with cysteine. The C-terminal lanthionine undergoes decarboxylation. This is followed by membrane translocation and cleavage of the modified precursor. The 2,3-didehydrobutyrine is determined to be the Z-isomer.

Lanthionine-containing peptide antibiotic (lantibiotic) active on Gram-positive bacteria. The bactericidal activity of lantibiotics is based on depolarization of energized bacterial cytoplasmic membranes, initiated by the formation of aqueous transmembrane pores. The protein is Lantibiotic epidermin (epiA) of Staphylococcus epidermidis.